The primary structure comprises 196 residues: uncharacterized protein (196 aa).

The HD domain occupies 51–164; the sequence is VAEHSLLVEE…DRIFGKPDPV (114 aa).

This is an uncharacterized protein from Rhodobacter capsulatus (strain ATCC BAA-309 / NBRC 16581 / SB1003).